A 342-amino-acid chain; its full sequence is MPRPVSVVFVSLIIAAAVGVWGVFAWNGGFEELDAIVNRHPSTGIPGLNHFPSLDQGLMSMAAFNLPVVGREPLFAEGRHFMAQLLANVFAIPIVLLTEDFRAAPGSVARYSTSWGVFSQLATSAVMCPLYGVCFSRRSNPRRVAVLPGRSTWIVLISVLIGYGAPAMLIFDPFSWGLKPQIWGVLAFTVYPLYVCLTASLLLKTVSSKRGRASRSVQKDSDSNSSLHYVVAGIVGVAGHLSYIGFHLGEHTGTAATRPDRVAQLVLRFLQIDYVITFAAMLTLAWHELTHSGRISLKPWRVAGYLLLGWLFIGPGATLAAAWALRERWIRQDTQEEKKRKL.

The next 5 membrane-spanning stretches (helical) occupy residues 5 to 25 (VSVV…GVFA), 81 to 101 (FMAQ…TEDF), 115 to 135 (WGVF…GVCF), 151 to 171 (STWI…MLIF), and 182 to 202 (IWGV…ASLL). Asn224 carries N-linked (GlcNAc...) asparagine glycosylation. 3 consecutive transmembrane segments (helical) span residues 229–249 (YVVA…FHLG), 269–289 (FLQI…WHEL), and 305–325 (YLLL…AWAL).

The protein belongs to the membrane-bound ascI terpene cyclase family.

The protein localises to the membrane. It functions in the pathway antifungal biosynthesis. Functionally, cyclase; part of the gene cluster that mediates the biosynthesis of the tetrahydropyranyl antifungal agent restricticin that acts as an inhibitor of CYP51 and blocks the ergosterol biosynthesis. The highly reducing polyketide synthase resH, the short chain dehydrogenase resG, the cyclase resF, the FAD-dependent monooxygenase resA and the enoylreductase resD are required to generate the first stable intermediate desmethylrestrictinol. ResH with resD biosynthesize the first polyketide chain intermediate that is reduced by resG, followed by epoxidation by resA before 6-endo cyclization via epoxide opening by resF leads to desmethylrestrictinol. The methyltransferase resE then catalyzes the C4 O-methylation of desmethylrestrictinol to produce restrictinol, and the nonribosomal peptide synthetase resC catalyzes the C3 esterification of restrictinol with glycine that leads to restricticin. The polypeptide is Terpene cyclase resF (Aspergillus sclerotiorum).